The sequence spans 430 residues: Methylenetetrahydrofolate--tRNA-(uracil-5-)-methyltransferase TrmFO (430 aa).

9–14 (GAGLAG) serves as a coordination point for FAD.

The protein belongs to the MnmG family. TrmFO subfamily. Requires FAD as cofactor.

It is found in the cytoplasm. The catalysed reaction is uridine(54) in tRNA + (6R)-5,10-methylene-5,6,7,8-tetrahydrofolate + NADH + H(+) = 5-methyluridine(54) in tRNA + (6S)-5,6,7,8-tetrahydrofolate + NAD(+). The enzyme catalyses uridine(54) in tRNA + (6R)-5,10-methylene-5,6,7,8-tetrahydrofolate + NADPH + H(+) = 5-methyluridine(54) in tRNA + (6S)-5,6,7,8-tetrahydrofolate + NADP(+). In terms of biological role, catalyzes the folate-dependent formation of 5-methyl-uridine at position 54 (M-5-U54) in all tRNAs. In Fervidobacterium nodosum (strain ATCC 35602 / DSM 5306 / Rt17-B1), this protein is Methylenetetrahydrofolate--tRNA-(uracil-5-)-methyltransferase TrmFO.